The sequence spans 231 residues: Urease accessory protein UreF (231 aa).

The protein belongs to the UreF family. UreD, UreF and UreG form a complex that acts as a GTP-hydrolysis-dependent molecular chaperone, activating the urease apoprotein by helping to assemble the nickel containing metallocenter of UreC. The UreE protein probably delivers the nickel.

It localises to the cytoplasm. Its function is as follows. Required for maturation of urease via the functional incorporation of the urease nickel metallocenter. This Magnetococcus marinus (strain ATCC BAA-1437 / JCM 17883 / MC-1) protein is Urease accessory protein UreF.